A 351-amino-acid polypeptide reads, in one-letter code: Outer membrane protein A (351 aa).

The N-terminal stretch at 1–21 is a signal peptide; sequence MKKTAIAIAVALAGFATVAQA. 8 beta stranded membrane-spanning segments follow: residues 27-37, 55-66, 70-78, 96-107, 112-120, 147-156, 161-168, and 187-195; these read TWYTGAKLGWS, QLGAGAFGGYQV, VGFEMGYDW, QGVQLTAKLGYP, LDIYTRLGG, PVFAGGVEWA, IATRLEYQ, and LLSLGVSYR. Tandem repeats lie at residues 206-207, 208-209, 210-211, and 212-213. A 4 X 2 AA tandem repeats of A-P region spans residues 206-213; that stretch reads APAPAPAP. The OmpA-like domain occupies 215 to 343; the sequence is VQTKHFTLKS…RVEIEVKGIK (129 aa). A disulfide bridge connects residues C316 and C328.

It belongs to the outer membrane OOP (TC 1.B.6) superfamily. OmpA family. In terms of assembly, monomer and homodimer.

Its subcellular location is the cell outer membrane. In terms of biological role, with TolR probably plays a role in maintaining the position of the peptidoglycan cell wall in the periplasm. Acts as a porin with low permeability that allows slow penetration of small solutes; an internal gate slows down solute passage. Functionally, required for conjugation with F-type plasmids; probably serves as the mating receptor on recipient cells. The sequence is that of Outer membrane protein A from Escherichia fergusonii (strain ATCC 35469 / DSM 13698 / CCUG 18766 / IAM 14443 / JCM 21226 / LMG 7866 / NBRC 102419 / NCTC 12128 / CDC 0568-73).